A 194-amino-acid polypeptide reads, in one-letter code: Probable transcription factor At4g00130 (194 aa).

This sequence belongs to the GeBP family.

This Arabidopsis thaliana (Mouse-ear cress) protein is Probable transcription factor At4g00130.